The following is a 333-amino-acid chain: Glycerol-3-phosphate dehydrogenase [NAD(P)+] (333 aa).

Residues Ser-13, Tyr-14, Arg-34, and Lys-108 each coordinate NADPH. Positions 108, 137, and 139 each coordinate sn-glycerol 3-phosphate. Ala-141 contributes to the NADPH binding site. The sn-glycerol 3-phosphate site is built by Lys-193, Asp-246, Ser-256, Arg-257, and Asn-258. Catalysis depends on Lys-193, which acts as the Proton acceptor. Residue Arg-257 coordinates NADPH. Glu-283 contributes to the NADPH binding site.

Belongs to the NAD-dependent glycerol-3-phosphate dehydrogenase family.

It is found in the cytoplasm. It carries out the reaction sn-glycerol 3-phosphate + NAD(+) = dihydroxyacetone phosphate + NADH + H(+). The catalysed reaction is sn-glycerol 3-phosphate + NADP(+) = dihydroxyacetone phosphate + NADPH + H(+). It functions in the pathway membrane lipid metabolism; glycerophospholipid metabolism. In terms of biological role, catalyzes the reduction of the glycolytic intermediate dihydroxyacetone phosphate (DHAP) to sn-glycerol 3-phosphate (G3P), the key precursor for phospholipid synthesis. The chain is Glycerol-3-phosphate dehydrogenase [NAD(P)+] from Idiomarina loihiensis (strain ATCC BAA-735 / DSM 15497 / L2-TR).